Consider the following 165-residue polypeptide: Growth arrest and DNA damage-inducible protein GADD45 alpha (165 aa).

Phosphothreonine is present on Thr2.

Belongs to the GADD45 family. As to quaternary structure, interacts with AURKA, PCNA, GADD45GIP1 and MAPK14.

It is found in the nucleus. In terms of biological role, might affect PCNA interaction with some CDK (cell division protein kinase) complexes; stimulates DNA excision repair in vitro and inhibits entry of cells into S phase. In T-cells, functions as a regulator of p38 MAPKs by inhibiting p88 phosphorylation and activity. This Felis catus (Cat) protein is Growth arrest and DNA damage-inducible protein GADD45 alpha (GADD45A).